The following is a 366-amino-acid chain: Protein-glutamate methylesterase/protein-glutamine glutaminase 2 (366 aa).

In terms of domain architecture, Response regulatory spans 3–119 (RLLIADDSAL…SLELDRLRPL (117 aa)). Position 53 is a 4-aspartylphosphate (aspartate 53). Residues 149-168 (AASSPRAKAARRGAARQRAK) form a disordered region. The span at 156–166 (KAARRGAARQR) shows a compositional bias: basic residues. Residues 171–363 (PAPGLVLIGT…AAVIEWGNAD (193 aa)) enclose the CheB-type methylesterase domain. Catalysis depends on residues serine 181, histidine 208, and aspartate 305.

This sequence belongs to the CheB family. In terms of processing, phosphorylated by CheA. Phosphorylation of the N-terminal regulatory domain activates the methylesterase activity.

The protein resides in the cytoplasm. The enzyme catalyses [protein]-L-glutamate 5-O-methyl ester + H2O = L-glutamyl-[protein] + methanol + H(+). The catalysed reaction is L-glutaminyl-[protein] + H2O = L-glutamyl-[protein] + NH4(+). In terms of biological role, involved in chemotaxis. Part of a chemotaxis signal transduction system that modulates chemotaxis in response to various stimuli. Catalyzes the demethylation of specific methylglutamate residues introduced into the chemoreceptors (methyl-accepting chemotaxis proteins or MCP) by CheR. Also mediates the irreversible deamidation of specific glutamine residues to glutamic acid. The chain is Protein-glutamate methylesterase/protein-glutamine glutaminase 2 from Rhodopseudomonas palustris (strain BisB18).